A 227-amino-acid polypeptide reads, in one-letter code: Orotidine 5'-phosphate decarboxylase (227 aa).

Residues aspartate 8, lysine 30, 59–68 (DLKLYDIPNT), threonine 118, arginine 178, glutamine 187, glycine 207, and arginine 208 contribute to the substrate site. Lysine 61 serves as the catalytic Proton donor.

It belongs to the OMP decarboxylase family. Type 1 subfamily. In terms of assembly, homodimer.

The enzyme catalyses orotidine 5'-phosphate + H(+) = UMP + CO2. It participates in pyrimidine metabolism; UMP biosynthesis via de novo pathway; UMP from orotate: step 2/2. Functionally, catalyzes the decarboxylation of orotidine 5'-monophosphate (OMP) to uridine 5'-monophosphate (UMP). This chain is Orotidine 5'-phosphate decarboxylase, found in Nitratiruptor sp. (strain SB155-2).